An 843-amino-acid chain; its full sequence is Respiratory burst oxidase homolog protein B (843 aa).

Positions 1–10 (MREEEMESSS) are enriched in acidic residues. Positions 1 to 27 (MREEEMESSSEGETNKISRCKATGSDN) are disordered. Topologically, residues 1-297 (MREEEMESSS…SYFFLENWKR (297 aa)) are cytoplasmic. EF-hand-like stretches follow at residues 114 to 122 (AVEGKLPKS) and 148 to 159 (RGTTSSSITKTE). EF-hand domains lie at 171–206 (SFDDRLQIFFDMVDKNLDGRITGDEVKEIIALSASA) and 215–250 (NVDEYAALIMEELDRDNLGYIELHNLETLLLQVPSQ). Positions 184, 186, 188, 190, and 195 each coordinate Ca(2+). Phosphoserine is present on serine 268. A helical transmembrane segment spans residues 298 to 318 (IWVLTLWISICITLFTWKFLQ). Over 319-383 (YKRKTVFEVM…FDDNINFHKV (65 aa)) the chain is Extracellular. Residues 336–495 (KGSAETLKFN…LFVIVYVLLI (160 aa)) form the Ferric oxidoreductase domain. A helical transmembrane segment spans residues 384 to 404 (VAFGIAVGIGLHAISHLACDF). Residues 405–439 (PRLLHAKNVEFEPMKKFFGDERPENYGWFMKGTDG) lie on the Cytoplasmic side of the membrane. The chain crosses the membrane as a helical span at residues 440–460 (WTGVTMVVLMLVAYVLAQSWF). Topologically, residues 461–482 (RRNRANLPKSLKRLTGFNAFWY) are extracellular. A helical membrane pass occupies residues 483–503 (SHHLFVIVYVLLIVHGYFVYL). Topologically, residues 504–511 (SKEWYHKT) are cytoplasmic. Residues 512 to 529 (TWMYLAVPVLLYAFERLI) form a helical membrane-spanning segment. Residues 530–659 (RAFRPGAKAV…PYGAPAQDYR (130 aa)) lie on the Extracellular side of the membrane. Residues 534 to 657 (PGAKAVKVLK…DGPYGAPAQD (124 aa)) enclose the FAD-binding FR-type domain. The helical transmembrane segment at 660–680 (NYDVLLLVGLGIGATPLISII) threads the bilayer. The Cytoplasmic portion of the chain corresponds to 681 to 843 (RDVLNNIKNQ…TKFEFHKENF (163 aa)).

Belongs to the RBOH (TC 5.B.1.3) family. Monomer and homodimer.

The protein resides in the membrane. Calcium-dependent NADPH oxidase that generates superoxide. This Arabidopsis thaliana (Mouse-ear cress) protein is Respiratory burst oxidase homolog protein B (RBOHB).